An 88-amino-acid polypeptide reads, in one-letter code: Small ribosomal subunit protein bS20 (88 aa).

The tract at residues Met1–Met27 is disordered.

This sequence belongs to the bacterial ribosomal protein bS20 family.

Binds directly to 16S ribosomal RNA. The polypeptide is Small ribosomal subunit protein bS20 (Shewanella loihica (strain ATCC BAA-1088 / PV-4)).